The primary structure comprises 736 residues: Catalase-peroxidase (736 aa).

A disordered region spans residues 1-21 (MSNEQKCPFSGTHGARTTVGT). Residues 96–224 (WHSAGTYRTG…LAAVQMGLIY (129 aa)) constitute a cross-link (tryptophyl-tyrosyl-methioninium (Trp-Tyr) (with M-250)). The active-site Proton acceptor is the His97. The tryptophyl-tyrosyl-methioninium (Tyr-Met) (with W-96) cross-link spans 224 to 250 (YVNPEGPDGNPDPVASGRDIRETFARM). Position 265 (His265) interacts with heme b.

The protein belongs to the peroxidase family. Peroxidase/catalase subfamily. In terms of assembly, homodimer or homotetramer. The cofactor is heme b. Post-translationally, formation of the three residue Trp-Tyr-Met cross-link is important for the catalase, but not the peroxidase activity of the enzyme.

It catalyses the reaction H2O2 + AH2 = A + 2 H2O. The catalysed reaction is 2 H2O2 = O2 + 2 H2O. Bifunctional enzyme with both catalase and broad-spectrum peroxidase activity. The chain is Catalase-peroxidase from Dechloromonas aromatica (strain RCB).